The primary structure comprises 542 residues: Homeobox protein ceh-18 (542 aa).

The span at 243-252 (NTPTQPTASL) shows a compositional bias: polar residues. Residues 243–264 (NTPTQPTASLTPKKAENRPPVV) are disordered. One can recognise a POU-specific domain in the interval 290–364 (DDRIDMNELE…LLKEWLADVE (75 aa)). The homeobox DNA-binding region spans 421–480 (RRRKRTNLDMNQRNALDTFFALNPRPDHDKMTDIANSLELDRDVVRVWFCNRRQKMRRVD). The tract at residues 514-542 (LASCQASNDDSDGTSGSPDAPSNDGCSDL) is disordered. A compositionally biased stretch (polar residues) spans 517 to 530 (CQASNDDSDGTSGS).

Belongs to the POU transcription factor family. As to quaternary structure, interacts with akir-1. Expressed in the gonadal sheath cells that signal the oocyte, but not in the oocyte.

It localises to the nucleus. Its function is as follows. Directs gonadal sheath cell differentiation and function. Also directs gonad migration and plays a role in specifying the differentiated phenotypes of epidermal cells during postembryonic development. Plays a role in oogenesis, regulating a sheath cell signal that causes oocytes to maintain diakinesis arrest during meiosis. Negatively regulates oocyte maturation, ovulation and MAPK activation in oocytes when sperm are not available for fertilization. May be recruited by akir-1 to the promoter regions of antimicrobial peptide genes to control gene expression in response to fungal infection. In Caenorhabditis elegans, this protein is Homeobox protein ceh-18.